Consider the following 567-residue polypeptide: Formate--tetrahydrofolate ligase (567 aa).

76 to 83 (TPAGEGKT) contributes to the ATP binding site.

Belongs to the formate--tetrahydrofolate ligase family.

It catalyses the reaction (6S)-5,6,7,8-tetrahydrofolate + formate + ATP = (6R)-10-formyltetrahydrofolate + ADP + phosphate. The protein operates within one-carbon metabolism; tetrahydrofolate interconversion. The sequence is that of Formate--tetrahydrofolate ligase from Sinorhizobium medicae (strain WSM419) (Ensifer medicae).